A 101-amino-acid chain; its full sequence is Unclassified hydrophobin dewD (101 aa).

Residues 1–21 (MHLSTSAAAILALSLAGPTMA) form the signal peptide. 4 cysteine pairs are disulfide-bonded: cysteine 27–cysteine 81, cysteine 41–cysteine 73, cysteine 42–cysteine 60, and cysteine 82–cysteine 91.

Self-assembles to form functional amyloid fibrils called rodlets. Self-assembly into fibrillar rodlets occurs spontaneously at hydrophobic:hydrophilic interfaces and the rodlets further associate laterally to form amphipathic monolayers.

It localises to the secreted. It is found in the spore wall. Functionally, aerial growth, conidiation, and dispersal of filamentous fungi in the environment rely upon a capability of their secreting small amphipathic proteins called hydrophobins (HPBs) with low sequence identity. Class I can self-assemble into an outermost layer of rodlet bundles on aerial cell surfaces, conferring cellular hydrophobicity that supports fungal growth, development and dispersal; whereas Class II form highly ordered films at water-air interfaces through intermolecular interactions but contribute nothing to the rodlet structure. DewD is an unclassified hydrophobin that contributes to the hydrophobicity of the spore surface. The chain is Unclassified hydrophobin dewD from Emericella nidulans (strain FGSC A4 / ATCC 38163 / CBS 112.46 / NRRL 194 / M139) (Aspergillus nidulans).